A 361-amino-acid chain; its full sequence is Nicotinate-nucleotide--dimethylbenzimidazole phosphoribosyltransferase (361 aa).

E315 serves as the catalytic Proton acceptor.

This sequence belongs to the CobT family.

The catalysed reaction is 5,6-dimethylbenzimidazole + nicotinate beta-D-ribonucleotide = alpha-ribazole 5'-phosphate + nicotinate + H(+). Its pathway is nucleoside biosynthesis; alpha-ribazole biosynthesis; alpha-ribazole from 5,6-dimethylbenzimidazole: step 1/2. Its function is as follows. Catalyzes the synthesis of alpha-ribazole-5'-phosphate from nicotinate mononucleotide (NAMN) and 5,6-dimethylbenzimidazole (DMB). The chain is Nicotinate-nucleotide--dimethylbenzimidazole phosphoribosyltransferase from Clostridium perfringens (strain 13 / Type A).